The following is a 109-amino-acid chain: UPF0235 protein MA_4097 (109 aa).

Belongs to the UPF0235 family.

The polypeptide is UPF0235 protein MA_4097 (Methanosarcina acetivorans (strain ATCC 35395 / DSM 2834 / JCM 12185 / C2A)).